A 452-amino-acid polypeptide reads, in one-letter code: tRNA modification GTPase MnmE (452 aa).

(6S)-5-formyl-5,6,7,8-tetrahydrofolate is bound by residues arginine 21, glutamate 78, and lysine 118. One can recognise a TrmE-type G domain in the interval glycine 214–glycine 375. Asparagine 224 contacts K(+). GTP-binding positions include asparagine 224 to serine 229, threonine 243 to threonine 249, and aspartate 268 to glycine 271. Serine 228 contacts Mg(2+). Residues threonine 243, isoleucine 245, and threonine 248 each coordinate K(+). Threonine 249 contacts Mg(2+). Lysine 452 serves as a coordination point for (6S)-5-formyl-5,6,7,8-tetrahydrofolate.

It belongs to the TRAFAC class TrmE-Era-EngA-EngB-Septin-like GTPase superfamily. TrmE GTPase family. In terms of assembly, homodimer. Heterotetramer of two MnmE and two MnmG subunits. K(+) is required as a cofactor.

It localises to the cytoplasm. Exhibits a very high intrinsic GTPase hydrolysis rate. Involved in the addition of a carboxymethylaminomethyl (cmnm) group at the wobble position (U34) of certain tRNAs, forming tRNA-cmnm(5)s(2)U34. The chain is tRNA modification GTPase MnmE from Actinobacillus pleuropneumoniae serotype 3 (strain JL03).